Here is a 144-residue protein sequence, read N- to C-terminus: Large ribosomal subunit protein uL15 (144 aa).

Basic and acidic residues predominate over residues 1 to 10 (MKLHELKPAE). The disordered stretch occupies residues 1–52 (MKLHELKPAEGSRQVRNRVGRGTSSGNGKTAGRGQKGQKARGKVRLGFEGGQ). Over residues 23-35 (TSSGNGKTAGRGQ) the composition is skewed to gly residues.

Belongs to the universal ribosomal protein uL15 family. In terms of assembly, part of the 50S ribosomal subunit.

Binds to the 23S rRNA. The polypeptide is Large ribosomal subunit protein uL15 (Ligilactobacillus salivarius (strain UCC118) (Lactobacillus salivarius)).